The sequence spans 430 residues: Adenylosuccinate synthetase (430 aa).

GTP is bound by residues 12–18 and 40–42; these read GDEGKGK and GHT. Aspartate 13 (proton acceptor) is an active-site residue. Residues aspartate 13 and glycine 40 each contribute to the Mg(2+) site. Residues 13-16, 38-41, threonine 128, arginine 142, glutamine 223, threonine 238, and arginine 302 contribute to the IMP site; these read DEGK and NAGH. Catalysis depends on histidine 41, which acts as the Proton donor. 298–304 contributes to the substrate binding site; the sequence is TTTGRPR. GTP contacts are provided by residues arginine 304, 330-332, and 412-414; these read SID and SVG.

This sequence belongs to the adenylosuccinate synthetase family. Homodimer. Mg(2+) serves as cofactor.

It localises to the cytoplasm. The enzyme catalyses IMP + L-aspartate + GTP = N(6)-(1,2-dicarboxyethyl)-AMP + GDP + phosphate + 2 H(+). It participates in purine metabolism; AMP biosynthesis via de novo pathway; AMP from IMP: step 1/2. Functionally, plays an important role in the de novo pathway of purine nucleotide biosynthesis. Catalyzes the first committed step in the biosynthesis of AMP from IMP. This is Adenylosuccinate synthetase from Streptococcus agalactiae serotype Ia (strain ATCC 27591 / A909 / CDC SS700).